We begin with the raw amino-acid sequence, 223 residues long: MPWAVGRRWAWITLFLTIVAVLIQAVWLWLGTQSFVFQREEIAQLARQYAGLDHELAFSRLIVELRRLHPGHVLPDEELQWVFVNAGGWMGAMCLLHASLSEYVLLFGTALGSHGHSGRYWAEISDTIISGTFHQWREGTTKSEVYYPGETVVHGPGEATAVEWGPNTWMVEYGRGVIPSTLAFALSDTIFSTQDFLTLFYTLRAYARGLRLELTTYLFGQDP.

Topologically, residues 1 to 9 (MPWAVGRRW) are lumenal. The segment at 2 to 8 (PWAVGRR) is targeting to endoplasmic reticulum-associated lipid droplets. A helical transmembrane segment spans residues 10-30 (AWITLFLTIVAVLIQAVWLWL). The Cytoplasmic portion of the chain corresponds to 31–223 (GTQSFVFQRE…LTTYLFGQDP (193 aa)). The segment at 99–106 (SLSEYVLL) is important for ligand-binding. A C-terminal hydrophobic region region spans residues 177 to 223 (VIPSTLAFALSDTIFSTQDFLTLFYTLRAYARGLRLELTTYLFGQDP).

This sequence belongs to the ERG2 family. As to quaternary structure, homotrimer. Interacts with KCNA2; cocaine consumption leads to increased interaction. Forms a ternary complex with ANK2 and ITPR3. The complex is disrupted by agonists. Interacts with KCNA4. Interacts with RNF112 in an oxidative stress-regulated manner. In terms of tissue distribution, expressed in ependymocytes and neurons throughout the CNS from the olfactory bulb to the spinal cord. Expressed by progenitor, mature and satellite oligodendrocytes and by Schwann cells (at protein level). Expressed in liver, intestine, kidney, brain, lung and heart. Expressed by retinal cells.

It localises to the nucleus inner membrane. The protein localises to the nucleus outer membrane. It is found in the nucleus envelope. The protein resides in the cytoplasmic vesicle. Its subcellular location is the endoplasmic reticulum membrane. It localises to the membrane. The protein localises to the lipid droplet. It is found in the cell junction. The protein resides in the cell membrane. Its subcellular location is the cell projection. It localises to the growth cone. The protein localises to the postsynaptic density membrane. In terms of biological role, functions in lipid transport from the endoplasmic reticulum and is involved in a wide array of cellular functions probably through regulation of the biogenesis of lipid microdomains at the plasma membrane. Involved in the regulation of different receptors it plays a role in BDNF signaling and EGF signaling. Also regulates ion channels like the potassium channel and could modulate neurotransmitter release. Plays a role in calcium signaling through modulation together with ANK2 of the ITP3R-dependent calcium efflux at the endoplasmic reticulum. Plays a role in several other cell functions including proliferation, survival and death. Originally identified for its ability to bind various psychoactive drugs it is involved in learning processes, memory and mood alteration. Necessary for proper mitochondrial axonal transport in motor neurons, in particular the retrograde movement of mitochondria. Plays a role in protecting cells against oxidative stress-induced cell death via its interaction with RNF112. The chain is Sigma non-opioid intracellular receptor 1 (Sigmar1) from Rattus norvegicus (Rat).